Reading from the N-terminus, the 257-residue chain is UPF0246 protein lpl1317 (257 aa).

Belongs to the UPF0246 family.

The sequence is that of UPF0246 protein lpl1317 from Legionella pneumophila (strain Lens).